The primary structure comprises 419 residues: UDP-N-acetylglucosamine 1-carboxyvinyltransferase (419 aa).

22–23 (KN) contacts phosphoenolpyruvate. R91 serves as a coordination point for UDP-N-acetyl-alpha-D-glucosamine. The active-site Proton donor is the C115. Residue C115 is modified to 2-(S-cysteinyl)pyruvic acid O-phosphothioketal. UDP-N-acetyl-alpha-D-glucosamine-binding positions include 120 to 124 (RPVDL), 160 to 163 (KVSV), D305, and I327.

This sequence belongs to the EPSP synthase family. MurA subfamily.

It localises to the cytoplasm. It carries out the reaction phosphoenolpyruvate + UDP-N-acetyl-alpha-D-glucosamine = UDP-N-acetyl-3-O-(1-carboxyvinyl)-alpha-D-glucosamine + phosphate. It participates in cell wall biogenesis; peptidoglycan biosynthesis. Its function is as follows. Cell wall formation. Adds enolpyruvyl to UDP-N-acetylglucosamine. The chain is UDP-N-acetylglucosamine 1-carboxyvinyltransferase from Sodalis glossinidius (strain morsitans).